The chain runs to 472 residues: 23S rRNA (uracil(1939)-C(5))-methyltransferase RlmD (472 aa).

A compositionally biased stretch (basic residues) spans M1 to K15. A disordered region spans residues M1–H23. The 65-residue stretch at H23–Q87 folds into the TRAM domain. Residues C100, C106, C109, and C188 each contribute to the [4Fe-4S] cluster site. S-adenosyl-L-methionine-binding residues include Q296, F325, N330, E346, N374, and D395. C428 acts as the Nucleophile in catalysis.

The protein belongs to the class I-like SAM-binding methyltransferase superfamily. RNA M5U methyltransferase family. RlmD subfamily.

It catalyses the reaction uridine(1939) in 23S rRNA + S-adenosyl-L-methionine = 5-methyluridine(1939) in 23S rRNA + S-adenosyl-L-homocysteine + H(+). In terms of biological role, catalyzes the formation of 5-methyl-uridine at position 1939 (m5U1939) in 23S rRNA. The polypeptide is 23S rRNA (uracil(1939)-C(5))-methyltransferase RlmD (Paraburkholderia xenovorans (strain LB400)).